The chain runs to 260 residues: Snake venom serine protease homolog 1 (260 aa).

The N-terminal stretch at 1–18 is a signal peptide; it reads MVLIRVLANLLLLQLSYA. A propeptide spanning residues 19-24 is cleaved from the precursor; sequence QESSEL. The Peptidase S1 domain maps to 25–251; sequence VIGGDECDIN…YTDWIEGIIA (227 aa). 6 disulfide bridges follow: C31–C165, C52–C68, C100–C258, C144–C212, C176–C191, and C202–C227. A glycan (N-linked (GlcNAc...) asparagine) is linked at N253.

It belongs to the peptidase S1 family. Snake venom subfamily. As to expression, expressed by the venom gland.

The protein localises to the secreted. Its function is as follows. Snake venom serine protease homolog that may act in the hemostasis system of the prey. In Bitis gabonica (Gaboon adder), this protein is Snake venom serine protease homolog 1.